A 385-amino-acid chain; its full sequence is ELAV-like protein 4 (385 aa).

The disordered stretch occupies residues 12 to 48 (TMEPQVSNGPTSNTSNGPSSNNRNCPSPMQTGAATDD). Low complexity predominate over residues 18 to 33 (SNGPTSNTSNGPSSNN). Residues 34–44 (RNCPSPMQTGA) show a composition bias toward polar residues. Ser38 carries the phosphoserine modification. RRM domains lie at 51–129 (TNLI…YARP) and 137–217 (ANLY…FANN). Ser233 carries the phosphoserine modification. Arg248 carries the post-translational modification Asymmetric dimethylarginine; by CARM1; alternate. Position 248 is an omega-N-methylarginine; by CARM1; alternate (Arg248). The RRM 3 domain maps to 302–380 (WCIFVYNLSP…RVLQVSFKTN (79 aa)).

It belongs to the RRM elav family. In terms of assembly, component of a TAU mRNP complex, at least composed of IGF2BP1, ELAVL4 and G3BP. Associates with the EIF4F cap-binding complex, composed of EIF4G, EIF4A, EIF4E and PABP. Within the EIF4F cap-binding complex, interacts with EIF4A. Interacts with SMN (via Tudor domain) in an RNA-independent manner; the interaction is required for localization of ELAVL4 to RNA granules. Interacts with MAP1 light chain LC1 (via C-terminus); the interaction contributes to the association of ELAVL4 with microtubules. Interacts with MAP1 light chain LC2. Post-translationally, methylated by CARM1, which leads to reduced RNA-binding activity and enhanced interaction with SMN. Methylation at Arg-248 by CARM1 weakens protective binding to the 3'UTR of CDKN1A mRNA and down-regulates CDKN1A protein expression, thereby maintaining cells in a proliferative state. Methylation is inhibited by NGF, which facilitates neurite outgrowth. As to expression, expressed in the brain, including the hippocampus, and in pancreatic beta cells (at protein level). Expressed in pyramidal neurons of the hippocampal CA3 and CA1 region and in the hilus but not in dentate granule cells (at protein level). Expressed in the dorsal root ganglion and the spinal cord (at protein level). Expressed in neural stem and progenitor cells (at protein level). Expressed in radial glia-like cells and in transient amplifying cells in the subventricular zone (SVZ), and in immature neurons both in the SVZ and the rostral migratory stream as well as in mature neurons in the olfactory bulb (at protein level). Expressed in testis and in the brain, including the hippocampus, the neocortex and the cerebellum. Expressed in lower- but not upper-layer primary neurons of the mature neocortex, in the hippocampal regions CA1-3 and the dentate gyrus. Expressed in the mitral and granule cells of the olfactory bulb, cerebral cortex, entorhinal cortex, thalamus, medial habenula, amygdala, granule cells of the cerebellum, pons, olivary nucleus, dorsal and ventral spinal cord and in dorsal root ganglia. Expressed in motor neurons. Isoform 4: Expressed in the brain. Isoform 5: Expressed in the brain. Isoform 6: Expressed in the brain. Isoform 7: Expressed in the brain. Isoform 8: Expressed in the brain. Isoform 9: Expressed in the brain. Isoform 10: Expressed in the brain. Isoform 11: Expressed in the brain.

The protein resides in the cytoplasm. It is found in the perikaryon. The protein localises to the cell projection. Its subcellular location is the dendrite. It localises to the axon. The protein resides in the growth cone. In terms of biological role, RNA-binding protein that is involved in the post-transcriptional regulation of mRNAs. Plays a role in the regulation of mRNA stability, alternative splicing and translation. Binds to AU-rich element (ARE) sequences in the 3' untranslated region (3'UTR) of target mRNAs, including GAP43, VEGF, FOS, CDKN1A and ACHE mRNA. Many of the target mRNAs are coding for RNA-binding proteins, transcription factors and proteins involved in RNA processing and/or neuronal development and function. By binding to the mRNA 3'UTR, decreases mRNA deadenylation and thereby contributes to the stabilization of mRNA molecules and their protection from decay. Also binds to the polyadenylated (poly(A)) tail in the 3'UTR of mRNA, thereby increasing its affinity for mRNA binding. Mainly plays a role in neuron-specific RNA processing by stabilization of mRNAs such as GAP43, ACHE and mRNAs of other neuronal proteins, thereby contributing to the differentiation of neural progenitor cells, nervous system development, learning and memory mechanisms. Involved in the negative regulation of the proliferative activity of neuronal stem cells and in the positive regulation of neuronal differentiation of neural progenitor cells. Promotes neuronal differentiation of neural stem/progenitor cells in the adult subventricular zone of the hippocampus by binding to and stabilizing SATB1 mRNA. Binds and stabilizes MSI1 mRNA in neural stem cells. Exhibits increased binding to ACHE mRNA during neuronal differentiation, thereby stabilizing ACHE mRNA and enhancing its expression. Protects CDKN1A mRNA from decay by binding to its 3'-UTR. May bind to APP and BACE1 mRNAS and the BACE1AS lncRNA and enhance their stabilization. Plays a role in neurite outgrowth and in the establishment and maturation of dendritic arbors, thereby contributing to neocortical and hippocampal circuitry function. Stabilizes GAP43 mRNA and protects it from decay during postembryonic development in the brain. By promoting the stabilization of GAP43 mRNA, plays a role in NGF-mediated neurite outgrowth. Binds to BDNF long 3'UTR mRNA, thereby leading to its stabilization and increased dendritic translation after activation of PKC. By increasing translation of BDNF after nerve injury, may contribute to nerve regeneration. Acts as a stabilizing factor by binding to the 3'UTR of NOVA1 mRNA, thereby increasing its translation and enhancing its functional activity in neuron-specific splicing. Stimulates translation of mRNA in a poly(A)- and cap-dependent manner, possibly by associating with the EIF4F cap-binding complex. May also negatively regulate translation by binding to the 5'UTR of Ins2 mRNA, thereby repressing its translation. Upon glucose stimulation, Ins2 mRNA is released from ELAVL4 and translational inhibition is abolished. Also plays a role in the regulation of alternative splicing. May regulate alternative splicing of CALCA pre-mRNA into Calcitonin and Calcitonin gene-related peptide 1 (CGRP) by competing with splicing regulator TIAR for binding to U-rich sequences of CALCA pre-mRNA. In Mus musculus (Mouse), this protein is ELAV-like protein 4 (Elavl4).